We begin with the raw amino-acid sequence, 311 residues long: Pyrimidine-specific ribonucleoside hydrolase RihA (311 aa).

His240 is an active-site residue.

This sequence belongs to the IUNH family. RihA subfamily.

Its function is as follows. Hydrolyzes cytidine or uridine to ribose and cytosine or uracil, respectively. The sequence is that of Pyrimidine-specific ribonucleoside hydrolase RihA from Salmonella dublin (strain CT_02021853).